We begin with the raw amino-acid sequence, 78 residues long: Protein SlyX homolog (78 aa).

This sequence belongs to the SlyX family.

This Xylella fastidiosa (strain 9a5c) protein is Protein SlyX homolog.